A 292-amino-acid chain; its full sequence is Phosphatidylserine decarboxylase proenzyme (292 aa).

Catalysis depends on charge relay system; for autoendoproteolytic cleavage activity residues D89, H146, and S252. The active-site Schiff-base intermediate with substrate; via pyruvic acid; for decarboxylase activity is S252. A Pyruvic acid (Ser); by autocatalysis modification is found at S252.

It belongs to the phosphatidylserine decarboxylase family. PSD-B subfamily. Prokaryotic type I sub-subfamily. As to quaternary structure, heterodimer of a large membrane-associated beta subunit and a small pyruvoyl-containing alpha subunit. Requires pyruvate as cofactor. Post-translationally, is synthesized initially as an inactive proenzyme. Formation of the active enzyme involves a self-maturation process in which the active site pyruvoyl group is generated from an internal serine residue via an autocatalytic post-translational modification. Two non-identical subunits are generated from the proenzyme in this reaction, and the pyruvate is formed at the N-terminus of the alpha chain, which is derived from the carboxyl end of the proenzyme. The autoendoproteolytic cleavage occurs by a canonical serine protease mechanism, in which the side chain hydroxyl group of the serine supplies its oxygen atom to form the C-terminus of the beta chain, while the remainder of the serine residue undergoes an oxidative deamination to produce ammonia and the pyruvoyl prosthetic group on the alpha chain. During this reaction, the Ser that is part of the protease active site of the proenzyme becomes the pyruvoyl prosthetic group, which constitutes an essential element of the active site of the mature decarboxylase.

The protein resides in the cell membrane. The enzyme catalyses a 1,2-diacyl-sn-glycero-3-phospho-L-serine + H(+) = a 1,2-diacyl-sn-glycero-3-phosphoethanolamine + CO2. It functions in the pathway phospholipid metabolism; phosphatidylethanolamine biosynthesis; phosphatidylethanolamine from CDP-diacylglycerol: step 2/2. Catalyzes the formation of phosphatidylethanolamine (PtdEtn) from phosphatidylserine (PtdSer). This Shewanella baltica (strain OS185) protein is Phosphatidylserine decarboxylase proenzyme.